The chain runs to 403 residues: Phosphopentomutase (403 aa).

Positions 13, 298, 303, 339, 340, and 351 each coordinate Mn(2+).

The protein belongs to the phosphopentomutase family. Mn(2+) is required as a cofactor.

Its subcellular location is the cytoplasm. It catalyses the reaction 2-deoxy-alpha-D-ribose 1-phosphate = 2-deoxy-D-ribose 5-phosphate. It carries out the reaction alpha-D-ribose 1-phosphate = D-ribose 5-phosphate. Its pathway is carbohydrate degradation; 2-deoxy-D-ribose 1-phosphate degradation; D-glyceraldehyde 3-phosphate and acetaldehyde from 2-deoxy-alpha-D-ribose 1-phosphate: step 1/2. Functionally, isomerase that catalyzes the conversion of deoxy-ribose 1-phosphate (dRib-1-P) and ribose 1-phosphate (Rib-1-P) to deoxy-ribose 5-phosphate (dRib-5-P) and ribose 5-phosphate (Rib-5-P), respectively. The sequence is that of Phosphopentomutase from Streptococcus pneumoniae serotype 2 (strain D39 / NCTC 7466).